The following is a 170-amino-acid chain: MTTTVPFVTCDLLDDHTDKDIQVLTPSLDGRFFKSYGARKIFSGQIVTVKCFEDNSRVKELLATDGTGKVLVVDGGASMRCALMGDMIAESAVKYHWDGVVIYGCIRDVDALAELDLGIHALAAIPQKSNRQGIGEVGVNLYFGGVTFQAGCYIYADNNGIIVSKQKLID.

Substrate is bound by residues Gly85–Ile88 and Arg107. Asp108 contacts a divalent metal cation.

This sequence belongs to the class II aldolase/RraA-like family. As to quaternary structure, homotrimer. It depends on a divalent metal cation as a cofactor.

It carries out the reaction 4-hydroxy-4-methyl-2-oxoglutarate = 2 pyruvate. It catalyses the reaction oxaloacetate + H(+) = pyruvate + CO2. In terms of biological role, catalyzes the aldol cleavage of 4-hydroxy-4-methyl-2-oxoglutarate (HMG) into 2 molecules of pyruvate. Also contains a secondary oxaloacetate (OAA) decarboxylase activity due to the common pyruvate enolate transition state formed following C-C bond cleavage in the retro-aldol and decarboxylation reactions. This is Putative 4-hydroxy-4-methyl-2-oxoglutarate aldolase from Acinetobacter baylyi (strain ATCC 33305 / BD413 / ADP1).